The chain runs to 302 residues: N-acetylaspartate synthetase (302 aa).

Pro residues predominate over residues 46–60 (PGPAAAPPAPPPAPV). The interval 46–72 (PGPAAAPPAPPPAPVAQPHGGAGGAGP) is disordered. Residues 121-141 (YALLAALCFAVSRSLLLTCLV) form a helical membrane-spanning segment. An N-acetyltransferase domain is found at 143 to 283 (AALLGLRYYY…VLPGMTLSLA (141 aa)).

It belongs to the NAT8 family. In terms of tissue distribution, expressed in brain.

The protein resides in the cytoplasm. Its subcellular location is the microsome membrane. It is found in the mitochondrion membrane. The protein localises to the endoplasmic reticulum membrane. The catalysed reaction is L-aspartate + acetyl-CoA = N-acetyl-L-aspartate + CoA + H(+). Aminooxyacetic acid (AOAA) blocks its activity in both cytoplasm and mitochondria. Its function is as follows. Catalyzes the synthesis of N-acetylaspartate acid (NAA) from L-aspartate and acetyl-CoA. Promotes dopamine uptake by regulating TNF-alpha expression. Attenuates methamphetamine-induced inhibition of dopamine uptake. This chain is N-acetylaspartate synthetase, found in Homo sapiens (Human).